Reading from the N-terminus, the 388-residue chain is Succinate--CoA ligase [ADP-forming] subunit beta (388 aa).

The ATP-grasp domain maps to 9–244 (KQLFAEFGLP…PSQEDKREAH (236 aa)). ATP is bound by residues Lys46, 53–55 (GRG), Glu99, Ser102, and Glu107. Positions 199 and 213 each coordinate Mg(2+). Substrate-binding positions include Asn264 and 321–323 (GIV).

The protein belongs to the succinate/malate CoA ligase beta subunit family. As to quaternary structure, heterotetramer of two alpha and two beta subunits. The cofactor is Mg(2+).

The catalysed reaction is succinate + ATP + CoA = succinyl-CoA + ADP + phosphate. It catalyses the reaction GTP + succinate + CoA = succinyl-CoA + GDP + phosphate. It functions in the pathway carbohydrate metabolism; tricarboxylic acid cycle; succinate from succinyl-CoA (ligase route): step 1/1. Its function is as follows. Succinyl-CoA synthetase functions in the citric acid cycle (TCA), coupling the hydrolysis of succinyl-CoA to the synthesis of either ATP or GTP and thus represents the only step of substrate-level phosphorylation in the TCA. The beta subunit provides nucleotide specificity of the enzyme and binds the substrate succinate, while the binding sites for coenzyme A and phosphate are found in the alpha subunit. The chain is Succinate--CoA ligase [ADP-forming] subunit beta from Vibrio vulnificus (strain YJ016).